Here is a 342-residue protein sequence, read N- to C-terminus: Farnesyl pyrophosphate synthase 1 (342 aa).

Residues K48, R51, and Q86 each coordinate isopentenyl diphosphate. Mg(2+) is bound by residues D93 and D97. R102 is a dimethylallyl diphosphate binding site. R103 contributes to the isopentenyl diphosphate binding site. Dimethylallyl diphosphate-binding residues include K190, T191, Q229, K246, and K255.

The protein belongs to the FPP/GGPP synthase family. Mg(2+) serves as cofactor.

It is found in the cytoplasm. The enzyme catalyses isopentenyl diphosphate + dimethylallyl diphosphate = (2E)-geranyl diphosphate + diphosphate. It catalyses the reaction isopentenyl diphosphate + (2E)-geranyl diphosphate = (2E,6E)-farnesyl diphosphate + diphosphate. It functions in the pathway isoprenoid biosynthesis; farnesyl diphosphate biosynthesis; farnesyl diphosphate from geranyl diphosphate and isopentenyl diphosphate: step 1/1. Its pathway is isoprenoid biosynthesis; geranyl diphosphate biosynthesis; geranyl diphosphate from dimethylallyl diphosphate and isopentenyl diphosphate: step 1/1. Its function is as follows. Catalyzes the sequential condensation of isopentenyl pyrophosphate with the allylic pyrophosphates, dimethylallyl pyrophosphate, and then with the resultant geranylpyrophosphate to the ultimate product farnesyl pyrophosphate. This is Farnesyl pyrophosphate synthase 1 (FPS1) from Parthenium argentatum (Guayule rubber plant).